Consider the following 356-residue polypeptide: Zinc finger CCCH domain-containing protein 49 (356 aa).

2 consecutive C3H1-type zinc fingers follow at residues Y120 to F146 and Y155 to P177. The disordered stretch occupies residues I209–R235. Positions E225–R235 are enriched in polar residues.

The protein is Zinc finger CCCH domain-containing protein 49 of Arabidopsis thaliana (Mouse-ear cress).